We begin with the raw amino-acid sequence, 197 residues long: Glycerol-3-phosphate acyltransferase (197 aa).

5 helical membrane passes run 7 to 27 (TLLP…LILT), 55 to 75 (GLAA…VLIV), 78 to 98 (VWPG…CFPV), 116 to 136 (LALA…VLFL), and 157 to 177 (VLGY…VLYL).

This sequence belongs to the PlsY family. In terms of assembly, probably interacts with PlsX.

The protein localises to the cell inner membrane. It catalyses the reaction an acyl phosphate + sn-glycerol 3-phosphate = a 1-acyl-sn-glycero-3-phosphate + phosphate. The protein operates within lipid metabolism; phospholipid metabolism. Catalyzes the transfer of an acyl group from acyl-phosphate (acyl-PO(4)) to glycerol-3-phosphate (G3P) to form lysophosphatidic acid (LPA). This enzyme utilizes acyl-phosphate as fatty acyl donor, but not acyl-CoA or acyl-ACP. The protein is Glycerol-3-phosphate acyltransferase of Novosphingobium aromaticivorans (strain ATCC 700278 / DSM 12444 / CCUG 56034 / CIP 105152 / NBRC 16084 / F199).